A 167-amino-acid chain; its full sequence is MQVVLGSLFLLLLSTSHGWQIRDRIGDNELEERIIYPGTLWCGHGNKSSGPNELGRFKHTDACCRTHDMCPDVMSAGESKHGLTNTASHTRLSCDCDDKFYDCLKNSADTISSYFVGKMYFNLIDTKCYKLEHPVTGCGERTEGRCLHYTVDKSKPKVYQWFDLRKY.

An N-terminal signal peptide occupies residues 1–18; sequence MQVVLGSLFLLLLSTSHG. Positions 19 to 33 are excised as a propeptide; sequence WQIRDRIGDNELEER. Residues tryptophan 41, glycine 43, and glycine 45 each contribute to the Ca(2+) site. Intrachain disulfides connect cysteine 42–cysteine 64, cysteine 63–cysteine 103, cysteine 70–cysteine 96, cysteine 94–cysteine 128, and cysteine 138–cysteine 146. Asparagine 46 carries an N-linked (GlcNAc...) asparagine glycan. Residue histidine 67 is part of the active site. Aspartate 68 is a binding site for Ca(2+). The active site involves aspartate 97.

It belongs to the phospholipase A2 family. Group III subfamily. Ca(2+) is required as a cofactor. Post-translationally, N-glycosylated; contains mannose, N-acetylglucosamine and fucose alphal-6 and/or alphal-3 linked to the innermost N-acetylglucosamine. As to expression, expressed by the venom gland.

It localises to the secreted. It carries out the reaction a 1,2-diacyl-sn-glycero-3-phosphocholine + H2O = a 1-acyl-sn-glycero-3-phosphocholine + a fatty acid + H(+). Its function is as follows. In vivo, intraplantar injection in mice cause spontaneous pain behaviors and paw swelling. PLA2 catalyzes the calcium-dependent hydrolysis of the 2-acyl groups in 3-sn-phosphoglycerides. The sequence is that of Phospholipase A2 from Apis mellifera (Honeybee).